Consider the following 427-residue polypeptide: Tryptophan synthase beta chain (427 aa).

N6-(pyridoxal phosphate)lysine is present on K100.

The protein belongs to the TrpB family. As to quaternary structure, tetramer of two alpha and two beta chains. Requires pyridoxal 5'-phosphate as cofactor.

It carries out the reaction (1S,2R)-1-C-(indol-3-yl)glycerol 3-phosphate + L-serine = D-glyceraldehyde 3-phosphate + L-tryptophan + H2O. Its pathway is amino-acid biosynthesis; L-tryptophan biosynthesis; L-tryptophan from chorismate: step 5/5. In terms of biological role, the beta subunit is responsible for the synthesis of L-tryptophan from indole and L-serine. This is Tryptophan synthase beta chain (trpB) from Streptomyces coelicolor (strain ATCC BAA-471 / A3(2) / M145).